An 89-amino-acid chain; its full sequence is Small ribosomal subunit protein uS15 (89 aa).

Belongs to the universal ribosomal protein uS15 family. Part of the 30S ribosomal subunit. Forms a bridge to the 50S subunit in the 70S ribosome, contacting the 23S rRNA.

Its function is as follows. One of the primary rRNA binding proteins, it binds directly to 16S rRNA where it helps nucleate assembly of the platform of the 30S subunit by binding and bridging several RNA helices of the 16S rRNA. Forms an intersubunit bridge (bridge B4) with the 23S rRNA of the 50S subunit in the ribosome. The polypeptide is Small ribosomal subunit protein uS15 (Haemophilus influenzae (strain 86-028NP)).